The sequence spans 455 residues: Dihydrolipoyllysine-residue succinyltransferase component of 2-oxoglutarate dehydrogenase complex, mitochondrial (455 aa).

The N-terminal 68 residues, 1 to 68, are a transit peptide targeting the mitochondrion; the sequence is MLSRSRCASR…RFFRTTAVCK (68 aa). A Lipoyl-binding domain is found at 71–145; it reads VITVKTPAFA…EGGTPLFTLR (75 aa). Ser82 carries the post-translational modification Phosphoserine. Lys111 is modified (N6-lipoyllysine). The residue at position 155 (Lys155) is an N6-acetyllysine. A compositionally biased stretch (low complexity) spans 155 to 173; the sequence is KPAAAPAAAAPKAEPTVSA. Positions 155-220 are disordered; sequence KPAAAPAAAA…PRAEAGAGVG (66 aa). Residues 174–193 are compositionally biased toward pro residues; that stretch reads VPPPPAAPIPTQMPPVPSPS. Residues Lys269, Lys274, Lys275, Lys279, and Lys309 each carry the N6-acetyllysine modification. Residues His426 and Asp430 contribute to the active site.

Belongs to the 2-oxoacid dehydrogenase family. In terms of assembly, the 2-oxoglutarate dehydrogenase complex is composed of OGDH (2-oxoglutarate dehydrogenase; E1), DLST (dihydrolipoamide succinyltransferase; E2), DLD (dihydrolipoamide dehydrogenase; E3) and the assembly factor KGD4. It contains multiple copies of the three enzymatic components (E1, E2 and E3). In the nucleus, the 2-oxoglutarate dehydrogenase complex associates with KAT2A. Interacts with ABHD11; this interaction maintains the functional lipoylation of the 2-oxoglutarate dehydrogenase complex. It depends on (R)-lipoate as a cofactor.

The protein resides in the mitochondrion matrix. It localises to the nucleus. It carries out the reaction N(6)-[(R)-dihydrolipoyl]-L-lysyl-[protein] + succinyl-CoA = N(6)-[(R)-S(8)-succinyldihydrolipoyl]-L-lysyl-[protein] + CoA. The protein operates within amino-acid degradation; L-lysine degradation via saccharopine pathway; glutaryl-CoA from L-lysine: step 6/6. It participates in carbohydrate metabolism; tricarboxylic acid cycle. Functionally, dihydrolipoamide succinyltransferase (E2) component of the 2-oxoglutarate dehydrogenase complex. The 2-oxoglutarate dehydrogenase complex catalyzes the overall conversion of 2-oxoglutarate to succinyl-CoA and CO(2). The 2-oxoglutarate dehydrogenase complex is mainly active in the mitochondrion. A fraction of the 2-oxoglutarate dehydrogenase complex also localizes in the nucleus and is required for lysine succinylation of histones: associates with KAT2A on chromatin and provides succinyl-CoA to histone succinyltransferase KAT2A. The polypeptide is Dihydrolipoyllysine-residue succinyltransferase component of 2-oxoglutarate dehydrogenase complex, mitochondrial (Bos taurus (Bovine)).